The following is a 345-amino-acid chain: Olfactory receptor 11G2 (345 aa).

Residues 1 to 62 are Extracellular-facing; sequence MHFLSQNDLN…LGFPCPREGQ (62 aa). An N-linked (GlcNAc...) asparagine glycan is attached at Asn43. A helical transmembrane segment spans residues 63 to 83; sequence ILLFVLFTVVYLLTLMGNGSI. Over 84–92 the chain is Cytoplasmic; it reads ICAVHWDQR. A helical membrane pass occupies residues 93–113; the sequence is LHAPMYILLANFSFLEICYVT. The Extracellular portion of the chain corresponds to 114–135; sequence STVPSMLANFLSDTKIISFSGC. Cys135 and Cys217 are disulfide-bonded. The chain crosses the membrane as a helical span at residues 136-156; that stretch reads FLQFYFFFSLGSTECFFLAVM. Topologically, residues 157-181 are cytoplasmic; that stretch reads AFDRYLAICRPLRYPTIMTRRLCTN. Residues 182–202 traverse the membrane as a helical segment; it reads LVVNCWVLGFIWFLIPIVNIS. The Extracellular portion of the chain corresponds to 203–241; the sequence is QMSFCGSRIIDHFLCDPAPLLTLTCKKGPVIELVFSVLS. A helical transmembrane segment spans residues 242–264; that stretch reads PLPVFMLFLFIVGSYALVVRAVL. The Cytoplasmic segment spans residues 265 to 275; the sequence is RVPSAAGRRKA. The chain crosses the membrane as a helical span at residues 276–296; the sequence is FSTCGSHLAVVSLFYGSVLVM. At 297–309 the chain is on the extracellular side; it reads YGSPPSKNEAGKQ. Residues 310 to 330 form a helical membrane-spanning segment; it reads KTVTLFYSVVTPLLNPVIYSL. Residues 331 to 345 are Cytoplasmic-facing; the sequence is RNKDMRKALKKFWGT.

The protein belongs to the G-protein coupled receptor 1 family.

The protein resides in the cell membrane. Odorant receptor. The sequence is that of Olfactory receptor 11G2 (OR11G2) from Homo sapiens (Human).